The chain runs to 373 residues: tRNA-specific 2-thiouridylase MnmA (373 aa).

ATP-binding positions include 12–19 (GMSGGVDS) and Met38. An interaction with target base in tRNA region spans residues 98 to 100 (NPD). The active-site Nucleophile is Cys103. Cys103 and Cys200 are joined by a disulfide. Residue Gly127 coordinates ATP. Positions 150 to 152 (KDQ) are interaction with tRNA. Residue Cys200 is the Cysteine persulfide intermediate of the active site. Residues 312–313 (RY) are interaction with tRNA.

This sequence belongs to the MnmA/TRMU family.

Its subcellular location is the cytoplasm. The enzyme catalyses S-sulfanyl-L-cysteinyl-[protein] + uridine(34) in tRNA + AH2 + ATP = 2-thiouridine(34) in tRNA + L-cysteinyl-[protein] + A + AMP + diphosphate + H(+). Functionally, catalyzes the 2-thiolation of uridine at the wobble position (U34) of tRNA, leading to the formation of s(2)U34. In Streptococcus pneumoniae (strain ATCC BAA-255 / R6), this protein is tRNA-specific 2-thiouridylase MnmA.